A 98-amino-acid polypeptide reads, in one-letter code: Large ribosomal subunit protein uL23 (98 aa).

This sequence belongs to the universal ribosomal protein uL23 family. In terms of assembly, part of the 50S ribosomal subunit. Contacts protein L29, and trigger factor when it is bound to the ribosome.

Functionally, one of the early assembly proteins it binds 23S rRNA. One of the proteins that surrounds the polypeptide exit tunnel on the outside of the ribosome. Forms the main docking site for trigger factor binding to the ribosome. In Methylorubrum populi (strain ATCC BAA-705 / NCIMB 13946 / BJ001) (Methylobacterium populi), this protein is Large ribosomal subunit protein uL23.